A 232-amino-acid chain; its full sequence is RNA chaperone ProQ (232 aa).

The tract at residues 105–182 (EAKARVQAQR…REEQHTPVSD (78 aa)) is disordered. Over residues 117-136 (QQAKKREAAAAAGEKEDAPR) the composition is skewed to basic and acidic residues. The segment covering 137-146 (RERKPRPTTP) has biased composition (basic residues). Basic and acidic residues predominate over residues 147 to 177 (RRKEGAERKPRAQKSVEKAPKTVKAPREEQH).

The protein belongs to the ProQ family.

It is found in the cytoplasm. In terms of biological role, RNA chaperone with significant RNA binding, RNA strand exchange and RNA duplexing activities. May regulate ProP activity through an RNA-based, post-transcriptional mechanism. The chain is RNA chaperone ProQ from Escherichia coli O7:K1 (strain IAI39 / ExPEC).